We begin with the raw amino-acid sequence, 124 residues long: Large ribosomal subunit protein bL12 (124 aa).

It belongs to the bacterial ribosomal protein bL12 family. As to quaternary structure, homodimer. Part of the ribosomal stalk of the 50S ribosomal subunit. Forms a multimeric L10(L12)X complex, where L10 forms an elongated spine to which 2 to 4 L12 dimers bind in a sequential fashion. Binds GTP-bound translation factors.

Functionally, forms part of the ribosomal stalk which helps the ribosome interact with GTP-bound translation factors. Is thus essential for accurate translation. The polypeptide is Large ribosomal subunit protein bL12 (Brucella abortus (strain S19)).